We begin with the raw amino-acid sequence, 189 residues long: Thermostable direct hemolysin-related (189 aa).

The N-terminal stretch at 1–24 (MKYRYFAKKSFLFISMLAAFKTFA) is a signal peptide. Cysteine 175 and cysteine 185 are oxidised to a cystine.

The protein belongs to the TDH hemolysin family. Homodimer.

Its function is as follows. Bacterial hemolysins are exotoxins that attack blood cell membranes and cause cell rupture by mechanisms not clearly defined. The protein is Thermostable direct hemolysin-related (tdh3) of Vibrio parahaemolyticus.